We begin with the raw amino-acid sequence, 448 residues long: Phosphoglucosamine mutase (448 aa).

Serine 100 functions as the Phosphoserine intermediate in the catalytic mechanism. Residues serine 100, aspartate 240, aspartate 242, and aspartate 244 each contribute to the Mg(2+) site. Serine 100 is modified (phosphoserine).

It belongs to the phosphohexose mutase family. It depends on Mg(2+) as a cofactor. In terms of processing, activated by phosphorylation.

It carries out the reaction alpha-D-glucosamine 1-phosphate = D-glucosamine 6-phosphate. In terms of biological role, catalyzes the conversion of glucosamine-6-phosphate to glucosamine-1-phosphate. The sequence is that of Phosphoglucosamine mutase from Geobacillus thermodenitrificans (strain NG80-2).